A 445-amino-acid chain; its full sequence is MSIHIKQSTMVRPAEETPNKSLWLSKIDMILRTPYSHTGAVLIYKQPDNNEDNIQPSSSMYFDANILIEALSKALVPYYPMAGRLKINGDRYEIDCNGEGALFVEAESSHVLEDFGDFRPNDELHRVMVPTCDYSKGISSFPLLMVQLTRFRCGGVSIGFAQHHHVCDRMSHFEFNNSWARIAKGLLPALEPVHDRYLHLCPRNPPQIKYTHSQFEPFVPSLPKELLDGKTSKSQTLFKLSREQINTLKQKLDWSNTTTRLSTYEVVAGHVWRSVSKARGLSDHEEIKLIMPVDGRSRINNPSLPKGYCGNVVFLAVCTATVGDLACNPLTDTAGKVQEALKGLDDDYLRSAIDHTESKPDLPVPYMGSPEKTLYPNVLVNSWGRIPYQAMDFGWGNPTFFGISNIFYDGQCFLIPSQNGDGSMTLAINLFSSHLSLFKKHFYDF.

Catalysis depends on proton acceptor residues His164 and Asp392.

This sequence belongs to the plant acyltransferase family. In terms of processing, N-terminus is blocked.

The catalysed reaction is anthranilate + benzoyl-CoA = N-benzoylanthranilate + CoA. It participates in phytoalexin biosynthesis; methoxydianthramide B biosynthesis. In terms of biological role, catalyzes the formation of N-benzoylanthranilate, in the course of methoxydianthramide B, a phytoalexin. Phytoalexins are produced in response to infection by parasites, and are essential for the expression of disease resistance. In Dianthus caryophyllus (Carnation), this protein is Anthranilate N-benzoyltransferase protein 3 (HCBT3).